The sequence spans 329 residues: Malate dehydrogenase (329 aa).

12–18 (GAAGQIG) lines the NAD(+) pocket. Substrate-binding residues include Arg-93 and Arg-99. Residues Asn-106, Gln-113, and 130-132 (TGN) contribute to the NAD(+) site. Substrate-binding residues include Asn-132 and Arg-163. His-188 (proton acceptor) is an active-site residue.

This sequence belongs to the LDH/MDH superfamily. MDH type 2 family.

It catalyses the reaction (S)-malate + NAD(+) = oxaloacetate + NADH + H(+). Catalyzes the reversible oxidation of malate to oxaloacetate. This chain is Malate dehydrogenase, found in Mycobacterium avium (strain 104).